Consider the following 347-residue polypeptide: Phenylalanine--tRNA ligase alpha subunit (347 aa).

Glutamate 265 contributes to the Mg(2+) binding site.

It belongs to the class-II aminoacyl-tRNA synthetase family. Phe-tRNA synthetase alpha subunit type 1 subfamily. In terms of assembly, tetramer of two alpha and two beta subunits. The cofactor is Mg(2+).

It is found in the cytoplasm. It catalyses the reaction tRNA(Phe) + L-phenylalanine + ATP = L-phenylalanyl-tRNA(Phe) + AMP + diphosphate + H(+). This is Phenylalanine--tRNA ligase alpha subunit from Wolbachia pipientis subsp. Culex pipiens (strain wPip).